The primary structure comprises 214 residues: 3,4-dihydroxy-2-butanone 4-phosphate synthase (214 aa).

D-ribulose 5-phosphate is bound by residues 37 to 38 (RE), Asp42, 150 to 154 (RRGHT), and Glu174. Glu38 serves as a coordination point for Mg(2+). Residue His153 coordinates Mg(2+).

Belongs to the DHBP synthase family. Homodimer. The cofactor is Mg(2+). Mn(2+) is required as a cofactor.

It catalyses the reaction D-ribulose 5-phosphate = (2S)-2-hydroxy-3-oxobutyl phosphate + formate + H(+). It participates in cofactor biosynthesis; riboflavin biosynthesis; 2-hydroxy-3-oxobutyl phosphate from D-ribulose 5-phosphate: step 1/1. Its function is as follows. Catalyzes the conversion of D-ribulose 5-phosphate to formate and 3,4-dihydroxy-2-butanone 4-phosphate. In Nitratidesulfovibrio vulgaris (strain ATCC 29579 / DSM 644 / CCUG 34227 / NCIMB 8303 / VKM B-1760 / Hildenborough) (Desulfovibrio vulgaris), this protein is 3,4-dihydroxy-2-butanone 4-phosphate synthase.